A 132-amino-acid polypeptide reads, in one-letter code: Ribosome-binding factor A (132 aa).

The protein belongs to the RbfA family. Monomer. Binds 30S ribosomal subunits, but not 50S ribosomal subunits or 70S ribosomes.

Its subcellular location is the cytoplasm. Its function is as follows. One of several proteins that assist in the late maturation steps of the functional core of the 30S ribosomal subunit. Associates with free 30S ribosomal subunits (but not with 30S subunits that are part of 70S ribosomes or polysomes). Required for efficient processing of 16S rRNA. May interact with the 5'-terminal helix region of 16S rRNA. The protein is Ribosome-binding factor A of Xanthomonas campestris pv. campestris (strain 8004).